Here is a 281-residue protein sequence, read N- to C-terminus: UPF0273 protein PAE3143 (281 aa).

Positions 4–248 (PRVRSYVPGL…YIKITGSSVR (245 aa)) constitute a KaiC domain. Residue 31-38 (GGPGTGKS) participates in ATP binding.

It belongs to the UPF0273 family.

The sequence is that of UPF0273 protein PAE3143 from Pyrobaculum aerophilum (strain ATCC 51768 / DSM 7523 / JCM 9630 / CIP 104966 / NBRC 100827 / IM2).